A 241-amino-acid polypeptide reads, in one-letter code: Venom nerve growth factor (241 aa).

The first 18 residues, 1–18, serve as a signal peptide directing secretion; sequence MSMLCYTLIIAFLIGIWA. The propeptide occupies 19–122; sequence APKSEDNVPL…SLNRNIRAKR (104 aa). Intrachain disulfides connect C136-C201, C179-C229, and C189-C231. N-linked (GlcNAc...) asparagine glycosylation is present at N145.

It belongs to the NGF-beta family. As to quaternary structure, homodimer; non-covalently linked. As to expression, expressed by the venom gland.

Its subcellular location is the secreted. Its function is as follows. Nerve growth factor is important for the development and maintenance of the sympathetic and sensory nervous systems. It stimulates division and differentiation of sympathetic and embryonic sensory neurons as well as basal forebrain cholinergic neurons in the brain. Its relevance in the snake venom is not clear. However, it has been shown to inhibit metalloproteinase-dependent proteolysis of platelet glycoprotein Ib alpha, suggesting a metalloproteinase inhibition to prevent metalloprotease autodigestion and/or protection against prey proteases. Binds a lipid between the two protein chains in the homodimer. The lipid-bound form promotes histamine relase from mouse mast cells, contrary to the lipid-free form. The polypeptide is Venom nerve growth factor (Crotalus durissus terrificus (South American rattlesnake)).